We begin with the raw amino-acid sequence, 392 residues long: Xylose operon regulatory protein (392 aa).

The 99-residue stretch at 288–386 (IQAMHYIRNH…DTTPKEYRDV (99 aa)) folds into the HTH araC/xylS-type domain. DNA-binding regions (H-T-H motif) lie at residues 305–326 (DQVL…KEEV) and 353–376 (INEI…KKAY).

Functionally, regulatory protein for the xylBAFGHR operon. This is Xylose operon regulatory protein (xylR) from Escherichia coli O157:H7.